A 793-amino-acid chain; its full sequence is Phenylalanine--tRNA ligase beta subunit (793 aa).

Positions 39 to 148 (AGQFTHVIVA…DEAPIGMDLR (110 aa)) constitute a tRNA-binding domain. In terms of domain architecture, B5 spans 401–477 (PGTVSFLFDT…RLYGYDKLQA (77 aa)). Mg(2+) contacts are provided by D455, D461, E464, and E465. The FDX-ACB domain occupies 698-792 (SKYPQIRRDL…LENEFSILLR (95 aa)).

This sequence belongs to the phenylalanyl-tRNA synthetase beta subunit family. Type 1 subfamily. Tetramer of two alpha and two beta subunits. Requires Mg(2+) as cofactor.

It localises to the cytoplasm. The catalysed reaction is tRNA(Phe) + L-phenylalanine + ATP = L-phenylalanyl-tRNA(Phe) + AMP + diphosphate + H(+). This Legionella pneumophila (strain Lens) protein is Phenylalanine--tRNA ligase beta subunit.